The following is a 126-amino-acid chain: MSALTSQLEEFRRCSTAEQYFDLLDVDYDPRVVAVNRLHILRFFAEEIAGLHDGADAEVSPEVLLRDYRAALIRAYEAFTTATALDHRLFKVLKDRAPEPAGFVPMSEITVERPATTQTDEKGQQR.

Positions 104–126 are disordered; that stretch reads VPMSEITVERPATTQTDEKGQQR.

Belongs to the NifW family. As to quaternary structure, homotrimer; associates with NifD.

In terms of biological role, may protect the nitrogenase Fe-Mo protein from oxidative damage. In Parafrankia sp. (strain EAN1pec), this protein is Nitrogenase-stabilizing/protective protein NifW.